Consider the following 74-residue polypeptide: MTNVYSFDGILVFGLLFICTCAYLKKVPRLNSWLLSEKKGVWGVFYKAAVIGTRLHVVVAASCLCMAFYLIFLK.

The N-terminal stretch at 1–22 (MTNVYSFDGILVFGLLFICTCA) is a signal peptide. Residues 23–52 (YLKKVPRLNSWLLSEKKGVWGVFYKAAVIG) are Extracellular-facing. The helical transmembrane segment at 53 to 73 (TRLHVVVAASCLCMAFYLIFL) threads the bilayer. A topological domain (cytoplasmic) is located at residue Lys74.

The protein belongs to the KISH family.

The protein resides in the golgi apparatus membrane. Involved in the early part of the secretory pathway. In Danio rerio (Zebrafish), this protein is Protein kish-B (tmem167b).